The sequence spans 490 residues: Probable alcohol acetyltransferase FCK4 (490 aa).

Belongs to the alcohol acetyltransferase FCK4 family.

It participates in secondary metabolite biosynthesis. In terms of biological role, probable alcohol acetyltransferase; part of the gene cluster that mediates the biosynthesis of cytokinins such as fusatin, fusatinic acids or 8-oxofusatin, known for their growth promoting and anti-senescence activities toward host plants. FCK1 is a bifunctional enzyme that performs the first steps in the biosynthesis of Fusarium cytokinins. It first condenses adenosine monophosphate (AMP) with dimethylallyl diphosphate (DMAPP) to yield isoprenyl adenosine monophosphate. It then catalyzes the removal of the phosphoribose to produce isopentenylaldehyde. The cytochrome P450 monooxygenase then converts isopentenylaldehyde to trans-zeatin. A condensation step converts trans-zeatin to fusatin which is further modified to produce fusatinic acid. The mechanism for oxidation of fusatin to fusatinic acid remains unknown. 8-oxofusatin could be produced through several pathways, via direct oxygenation of fusatin, or via the 8-oxo-pentenyladenine intermediate which itself must arise from either the prenylation of 8-oxo-AMP by FCK1 and/or oxygenation of isopentenylaldehyde. Both the FCK3 and FCK4 enzymes act downstream of the identified cytokinins to produce yet unidentified compounds. This chain is Probable alcohol acetyltransferase FCK4, found in Fusarium pseudograminearum (strain CS3096) (Wheat and barley crown-rot fungus).